The sequence spans 371 residues: Chaperone protein DnaJ (371 aa).

The J domain maps to 5–70 (CYYEILNVSK…SKRSRYDQFG (66 aa)). A CR-type zinc finger spans residues 127–204 (GVEKEITIPR…CYGNGKVKKQ (78 aa)). Residues Cys-140, Cys-143, Cys-156, Cys-159, Cys-178, Cys-181, Cys-192, and Cys-195 each contribute to the Zn(2+) site. 4 CXXCXGXG motif repeats span residues 140–147 (CDSCDGTG), 156–163 (CHACHGQG), 178–185 (CPVCNGTG), and 192–199 (CDACYGNG).

It belongs to the DnaJ family. In terms of assembly, homodimer. Requires Zn(2+) as cofactor.

The protein localises to the cytoplasm. Its function is as follows. Participates actively in the response to hyperosmotic and heat shock by preventing the aggregation of stress-denatured proteins and by disaggregating proteins, also in an autonomous, DnaK-independent fashion. Unfolded proteins bind initially to DnaJ; upon interaction with the DnaJ-bound protein, DnaK hydrolyzes its bound ATP, resulting in the formation of a stable complex. GrpE releases ADP from DnaK; ATP binding to DnaK triggers the release of the substrate protein, thus completing the reaction cycle. Several rounds of ATP-dependent interactions between DnaJ, DnaK and GrpE are required for fully efficient folding. Also involved, together with DnaK and GrpE, in the DNA replication of plasmids through activation of initiation proteins. The polypeptide is Chaperone protein DnaJ (Francisella tularensis subsp. tularensis (strain WY96-3418)).